The chain runs to 714 residues: RanBP-type and C3HC4-type zinc finger-containing protein 1 (714 aa).

Disordered stretches follow at residues methionine 1–glycine 23 and serine 152–proline 172. A compositionally biased stretch (polar residues) spans proline 14 to glycine 23. The 77-residue stretch at leucine 225–arginine 301 folds into the Ubiquitin-like domain. Residues arginine 394–glutamate 426 form a RanBP2-type zinc finger. The segment at glutamate 482–cysteine 710 is TRIAD supradomain. Zn(2+)-binding residues include cysteine 486, cysteine 489, cysteine 504, histidine 506, cysteine 509, cysteine 512, cysteine 527, cysteine 536, cysteine 575, cysteine 580, cysteine 595, cysteine 598, cysteine 603, cysteine 606, histidine 610, cysteine 615, cysteine 651, and cysteine 654. The segment at cysteine 486 to cysteine 536 adopts an RING-type 1 zinc-finger fold. The segment at glutamine 555–cysteine 615 adopts an IBR-type zinc-finger fold. The RING-type 2; atypical zinc-finger motif lies at cysteine 651 to threonine 680. The active site involves cysteine 664. Zn(2+)-binding residues include cysteine 669 and cysteine 672.

Belongs to the RBR family. As to quaternary structure, component of the LUBAC complex (linear ubiquitin chain assembly complex).

It carries out the reaction [E2 ubiquitin-conjugating enzyme]-S-ubiquitinyl-L-cysteine + [acceptor protein]-L-lysine = [E2 ubiquitin-conjugating enzyme]-L-cysteine + [acceptor protein]-N(6)-ubiquitinyl-L-lysine.. It participates in protein modification; protein ubiquitination. Component of the LUBAC complex which conjugates linear ('Met-1'-linked) polyubiquitin chains to substrates and plays a key role in NF-kappa-B activation and regulation of inflammation. LUBAC conjugates linear polyubiquitin to ikbkg and RIPK1 and is involved in activation of the canonical NF-kappa-B and the JNK signaling pathways. Linear ubiquitination mediated by the LUBAC complex interferes with TNF-induced cell death and thereby prevents inflammation. LUBAC is recruited to the TNF-R1 signaling complex (TNF-RSC) to conjugate linear polyubiquitin to ikbkg and possibly other components contributing to the stability of the complex. The LUBAC complex is also involved in innate immunity by conjugating linear polyubiquitin chains at the surface of bacteria invading the cytosol to form the ubiquitin coat surrounding bacteria. LUBAC is not able to initiate formation of the bacterial ubiquitin coat, and can only promote formation of linear polyubiquitins on pre-existing ubiquitin. The bacterial ubiquitin coat acts as an 'eat-me' signal for xenophagy and promotes NF-kappa-B activation. Binds polyubiquitin of different linkage types. The sequence is that of RanBP-type and C3HC4-type zinc finger-containing protein 1 (rbck1) from Danio rerio (Zebrafish).